The sequence spans 601 residues: Deoxyhypusine synthase (601 aa).

NAD(+)-binding positions include 109–113 (ANLMG) and 184–186 (SGG). 189 to 190 (EH) provides a ligand contact to spermidine. Residues 210-242 (GHVSSTVSSEATAPPKGLQQRAEKPLGTRAAAG) are disordered. The segment covering 211 to 220 (HVSSTVSSEA) has biased composition (polar residues). Residue aspartate 398 participates in NAD(+) binding. Positions 411–451 (PAARPAHRKGGPVADENAGNSKELKRSRKASSSSSTSATAV) are disordered. The span at 440–451 (ASSSSSTSATAV) shows a compositional bias: low complexity. Residue glycine 489 participates in NAD(+) binding. A spermidine-binding site is contributed by histidine 494. 514-515 (NG) provides a ligand contact to NAD(+). Spermidine contacts are provided by residues 520–522 (GSD) and 529–535 (EALSWGK). Lysine 535 functions as the Nucleophile in the catalytic mechanism. 548-549 (EV) contacts NAD(+). The disordered stretch occupies residues 568–601 (RRATDDAQPRRKRSSRGARPPQDVSGHSHLCRGE).

The protein belongs to the deoxyhypusine synthase family. As to quaternary structure, homodimer. NAD(+) is required as a cofactor.

It carries out the reaction [eIF5A protein]-L-lysine + spermidine = [eIF5A protein]-deoxyhypusine + propane-1,3-diamine. Its pathway is protein modification; eIF5A hypusination. Its activity is regulated as follows. N1-guanyl-1,7-diaminoheptane has a small inhibitory effect on activity. Its function is as follows. Catalyzes the NAD-dependent oxidative cleavage of spermidine and the subsequent transfer of the butylamine moiety of spermidine to the epsilon-amino group of a specific lysine residue of the eIF-5A precursor protein to form the intermediate deoxyhypusine residue. This Leishmania donovani protein is Deoxyhypusine synthase.